The following is a 650-amino-acid chain: Probable E3 ubiquitin ligase complex SCF subunit scon-2 (650 aa).

An F-box domain is found at 124–170 (IDFISALPVELAQKVLCYLDTVSLTKAAQVSQRWRTLADSDAVWVRM). Residues 200–244 (QRQLAKGGPQGRVTELADSHDSQDRSVNQHGKRPAAEAEEEDPIK) are disordered. The span at 214–223 (ELADSHDSQD) shows a compositional bias: basic and acidic residues. WD repeat units lie at residues 292–320 (GHENGVTCLQLDDNILATGSYDTTIKIWN), 332–360 (GHTAGIRALQFDDSKLISGSLDHTIKVWN), 372–400 (AHTDSVISVHFDGHLLASGSSDKTVKIFD), 411–441 (GHSDWVNSTHVDIKSRTVFSASDDTTIKLWD), and 453–488 (GHVGHVQQVLILPPEYEPDEEVLNGASQDNQDAMSV). Positions 482–525 (NQDAMSVSSGGSGSPSMSHAQIERAGSPGSHSSSHNLLPSSLPS) are disordered. Low complexity-rich tracts occupy residues 487–499 (SVSSGGSGSPSMS) and 507–525 (GSPGSHSSSHNLLPSSLPS). WD repeat units lie at residues 528-564 (EDVRHLYGSAFVADESRPLPPRYFMTGGLDSTMRLWD), 576-604 (GHLEGVWSLAGDTIRVISGANDGMVKTWE), and 616-644 (GHCGPVTCVGLSDSLMASGSEDGTIRLHS).

Belongs to the WD repeat MET30/SCONB/SCON-2 family. In terms of assembly, component of the SCF(scon-2) E3 ubiquitin ligase complex.

It functions in the pathway protein modification; protein ubiquitination. In terms of biological role, component of the SCF(scon-2) E3 ubiquitin ligase complex involved in the regulation of sulfur metabolite repression, probably by mediating the inactivation or degradation of the metR transcription factor. The sequence is that of Probable E3 ubiquitin ligase complex SCF subunit scon-2 (scon-2) from Neurospora crassa (strain ATCC 24698 / 74-OR23-1A / CBS 708.71 / DSM 1257 / FGSC 987).